A 1025-amino-acid chain; its full sequence is Multidrug resistance protein MdtC (1025 aa).

The next 12 helical transmembrane spans lie at 16–36 (LLTL…PVAP), 333–353 (EVEQ…FVFL), 360–380 (LIPA…MYLC), 387–407 (LSLM…IVVL), 431–451 (VGFT…PLLM), 459–479 (FFAE…FVSV), 528–548 (WVLL…ISIP), 853–873 (LWLM…LYES), 875–895 (VHPL…LLAL), 897–917 (LFDT…IGIV), 953–973 (PILM…LTSG), and 984–1004 (ITIA…TPVV).

This sequence belongs to the resistance-nodulation-cell division (RND) (TC 2.A.6) family. MdtC subfamily. As to quaternary structure, part of a tripartite efflux system composed of MdtA, MdtB and MdtC. MdtC forms a heteromultimer with MdtB.

The protein resides in the cell inner membrane. The polypeptide is Multidrug resistance protein MdtC (Pantoea ananatis (strain AJ13355)).